Reading from the N-terminus, the 167-residue chain is Probable chemoreceptor glutamine deamidase CheD (167 aa).

The protein belongs to the CheD family.

It carries out the reaction L-glutaminyl-[protein] + H2O = L-glutamyl-[protein] + NH4(+). Functionally, probably deamidates glutamine residues to glutamate on methyl-accepting chemotaxis receptors (MCPs), playing an important role in chemotaxis. The chain is Probable chemoreceptor glutamine deamidase CheD from Moorella thermoacetica (strain ATCC 39073 / JCM 9320).